The primary structure comprises 361 residues: Glutamine synthetase (361 aa).

One can recognise a GS beta-grasp domain in the interval 23–103 (CQAMYIWVDG…VLCETYKYNK (81 aa)). In terms of domain architecture, GS catalytic spans 110–361 (QRWKCMEVMT…LVRTICLNEQ (252 aa)). E131 provides a ligand contact to ATP. Mn(2+)-binding residues include E131, E133, and E200. Position 200–205 (200–205 (EFQVGP)) interacts with ATP. 243–244 (DW) provides a ligand contact to L-glutamate. Mn(2+) is bound at residue H250. ATP-binding positions include 252-254 (NFS), R316, and R321. R316 provides a ligand contact to L-glutamate. 333-335 (YLE) lines the ADP pocket. E335 serves as a coordination point for Mn(2+). R337 is an L-glutamate binding site.

The protein belongs to the glutamine synthetase family. The cofactor is Mg(2+). Mn(2+) serves as cofactor.

The protein localises to the cytoplasm. The protein resides in the cytosol. Its subcellular location is the microsome. It localises to the mitochondrion. The enzyme catalyses L-glutamate + NH4(+) + ATP = L-glutamine + ADP + phosphate + H(+). In terms of biological role, glutamine synthetase that catalyzes the ATP-dependent conversion of glutamate and ammonia to glutamine. This is Glutamine synthetase from Panulirus argus (Caribbean spiny lobster).